We begin with the raw amino-acid sequence, 274 residues long: uncharacterized protein (274 aa).

Positions 3–141 (IFIPKARRPT…TIRIGISLKQ (139 aa)) constitute a C2 NT-type domain.

This sequence to yeast YBL086c.

This is an uncharacterized protein from Schizosaccharomyces pombe (strain 972 / ATCC 24843) (Fission yeast).